The sequence spans 564 residues: Dihydroxy-acid dehydratase (564 aa).

[2Fe-2S] cluster is bound at residue C53. D85 provides a ligand contact to Mg(2+). Residue C126 participates in [2Fe-2S] cluster binding. Residues D127 and K128 each coordinate Mg(2+). Position 128 is an N6-carboxylysine (K128). C203 contacts [2Fe-2S] cluster. E454 contributes to the Mg(2+) binding site. S480 functions as the Proton acceptor in the catalytic mechanism.

This sequence belongs to the IlvD/Edd family. Homodimer. The cofactor is [2Fe-2S] cluster. Mg(2+) serves as cofactor.

It catalyses the reaction (2R)-2,3-dihydroxy-3-methylbutanoate = 3-methyl-2-oxobutanoate + H2O. The catalysed reaction is (2R,3R)-2,3-dihydroxy-3-methylpentanoate = (S)-3-methyl-2-oxopentanoate + H2O. It participates in amino-acid biosynthesis; L-isoleucine biosynthesis; L-isoleucine from 2-oxobutanoate: step 3/4. Its pathway is amino-acid biosynthesis; L-valine biosynthesis; L-valine from pyruvate: step 3/4. Functionally, functions in the biosynthesis of branched-chain amino acids. Catalyzes the dehydration of (2R,3R)-2,3-dihydroxy-3-methylpentanoate (2,3-dihydroxy-3-methylvalerate) into 2-oxo-3-methylpentanoate (2-oxo-3-methylvalerate) and of (2R)-2,3-dihydroxy-3-methylbutanoate (2,3-dihydroxyisovalerate) into 2-oxo-3-methylbutanoate (2-oxoisovalerate), the penultimate precursor to L-isoleucine and L-valine, respectively. The polypeptide is Dihydroxy-acid dehydratase (Mycobacterium ulcerans (strain Agy99)).